The primary structure comprises 644 residues: Kelch-like protein 34 (644 aa).

The BTB domain maps to 29–96 (CDVTLETEGS…IYTAWLSLSM (68 aa)). Positions 131–238 (CCFAANVAAR…PADVLRRVYS (108 aa)) constitute a BACK domain. A disordered region spans residues 304 to 329 (AARGQVAAPEPEEEEEELEEEEEEEE). The segment covering 313–329 (EPEEEEEELEEEEEEEE) has biased composition (acidic residues). 6 Kelch repeats span residues 320 to 366 (ELEE…TAGN), 367 to 425 (FLFV…AVGE), 426 to 473 (RLLA…VGDR), 475 to 526 (VVYI…VLRG), 528 to 571 (VFAF…VVEE), and 573 to 623 (ALLL…VLQL).

The sequence is that of Kelch-like protein 34 (KLHL34) from Homo sapiens (Human).